Here is a 389-residue protein sequence, read N- to C-terminus: Mannuronan synthase (389 aa).

The region spanning 16 to 116 is the PilZ domain; that stretch reads QRQFARVKLP…EVAALRYLIT (101 aa).

Belongs to the Alg44 family.

The protein localises to the periplasm. It catalyses the reaction [(1-&gt;4)-beta-D-mannuronosyl](n) + GDP-alpha-D-mannuronate = [(1-&gt;4)-beta-D-mannuronosyl](n+1) + GDP + H(+). Its pathway is glycan biosynthesis; alginate biosynthesis. Functionally, required for alginate biosynthesis. The protein is Mannuronan synthase (alg44) of Pseudomonas aeruginosa (strain ATCC 15692 / DSM 22644 / CIP 104116 / JCM 14847 / LMG 12228 / 1C / PRS 101 / PAO1).